We begin with the raw amino-acid sequence, 167 residues long: Lipoprotein signal peptidase (167 aa).

A run of 3 helical transmembrane segments spans residues L7–V27, F61–W81, and N87–I107. Active-site residues include D117 and D136. The chain crosses the membrane as a helical span at residues I126–I146.

Belongs to the peptidase A8 family.

Its subcellular location is the cell inner membrane. The catalysed reaction is Release of signal peptides from bacterial membrane prolipoproteins. Hydrolyzes -Xaa-Yaa-Zaa-|-(S,diacylglyceryl)Cys-, in which Xaa is hydrophobic (preferably Leu), and Yaa (Ala or Ser) and Zaa (Gly or Ala) have small, neutral side chains.. It participates in protein modification; lipoprotein biosynthesis (signal peptide cleavage). Its function is as follows. This protein specifically catalyzes the removal of signal peptides from prolipoproteins. The polypeptide is Lipoprotein signal peptidase (Bartonella tribocorum (strain CIP 105476 / IBS 506)).